A 232-amino-acid chain; its full sequence is Probable transglycosylase SceD (232 aa).

The N-terminal stretch at 1 to 25 (MKKLLVASSASAALFAVGVGANAHA) is a signal peptide. The interval 84–154 (DSSAQQAPAQ…QQSADSGSNV (71 aa)) is disordered. The segment covering 87 to 148 (AQQAPAQSTT…QTQQPAQQSA (62 aa)) has biased composition (low complexity).

This sequence belongs to the transglycosylase family. SceD subfamily.

It is found in the secreted. Functionally, is able to cleave peptidoglycan and affects clumping and separation of bacterial cells. The sequence is that of Probable transglycosylase SceD (sceD) from Staphylococcus carnosus (strain TM300).